The following is a 434-amino-acid chain: GTPase Obg (434 aa).

One can recognise an Obg domain in the interval 2–160 (PTFVDQTKIE…RVLRLELKLL (159 aa)). The 174-residue stretch at 161–334 (ADVGLVGFPS…LMNDTATLVE (174 aa)) folds into the OBG-type G domain. GTP contacts are provided by residues 167–174 (GFPSVGKS), 192–196 (FTTLT), 214–217 (DLPG), 284–287 (SQMD), and 315–317 (SSV). Residues serine 174 and threonine 194 each contribute to the Mg(2+) site. The OCT domain occupies 356–434 (YKAPQKNEFT…IGKFVFEFVQ (79 aa)).

The protein belongs to the TRAFAC class OBG-HflX-like GTPase superfamily. OBG GTPase family. In terms of assembly, monomer. Requires Mg(2+) as cofactor.

Its subcellular location is the cytoplasm. Its function is as follows. An essential GTPase which binds GTP, GDP and possibly (p)ppGpp with moderate affinity, with high nucleotide exchange rates and a fairly low GTP hydrolysis rate. Plays a role in control of the cell cycle, stress response, ribosome biogenesis and in those bacteria that undergo differentiation, in morphogenesis control. This Lactobacillus helveticus (strain DPC 4571) protein is GTPase Obg.